Here is a 155-residue protein sequence, read N- to C-terminus: MSNNIDVVEIYTDGACSGNPGPGGWAAVLLYKGTKKEISGFEENTTNNRMELKAVIEGLKALKRPCKVNLYSDSSYVINAFKEGWLEKWQKNNWLKSDKTPVENQDLWKELLEISKNHQVNWIKVKGHADNEYNNLCDRLATEQIKRNTRQNPKE.

The region spanning 4–146 is the RNase H type-1 domain; sequence NIDVVEIYTD…CDRLATEQIK (143 aa). Residues Asp13, Glu51, Asp73, and Asp138 each contribute to the Mg(2+) site.

This sequence belongs to the RNase H family. In terms of assembly, monomer. Requires Mg(2+) as cofactor.

It is found in the cytoplasm. It catalyses the reaction Endonucleolytic cleavage to 5'-phosphomonoester.. Endonuclease that specifically degrades the RNA of RNA-DNA hybrids. The chain is Ribonuclease H from Thermoanaerobacter pseudethanolicus (strain ATCC 33223 / 39E) (Clostridium thermohydrosulfuricum).